Reading from the N-terminus, the 782-residue chain is ATP-dependent RNA helicase MAK5 (782 aa).

Positions Met-1 to Leu-22 are enriched in basic residues. 2 disordered regions span residues Met-1–Lys-24 and Phe-71–Lys-164. Positions Phe-71 to Thr-88 are enriched in basic and acidic residues. Residues Met-96–Gln-147 are compositionally biased toward acidic residues. Residues Glu-197–Lys-225 carry the Q motif motif. A Helicase ATP-binding domain is found at Ile-228–Ser-426. Ala-241–Thr-248 contacts ATP. The DEAD box motif lies at Asp-364–Asp-367. The region spanning Tyr-478–Asp-635 is the Helicase C-terminal domain. The disordered stretch occupies residues Asp-762–Lys-782. Residues Ser-766–Lys-782 show a composition bias toward basic residues.

This sequence belongs to the DEAD box helicase family. DDX24/MAK5 subfamily.

The protein resides in the nucleus. It is found in the nucleolus. The catalysed reaction is ATP + H2O = ADP + phosphate + H(+). In terms of biological role, ATP-binding RNA helicase involved in the biogenesis of 60S ribosomal subunits and is required for the normal formation of 25S and 5.8S rRNAs. The polypeptide is ATP-dependent RNA helicase MAK5 (MAK5) (Candida albicans (strain SC5314 / ATCC MYA-2876) (Yeast)).